A 461-amino-acid polypeptide reads, in one-letter code: Bifunctional protein GlmU (461 aa).

Positions 1-229 (MEKYVVVLAA…FSESLGVNDR (229 aa)) are pyrophosphorylase. UDP-N-acetyl-alpha-D-glucosamine is bound by residues 8 to 11 (LAAG), K22, Q72, and 77 to 78 (GT). D102 serves as a coordination point for Mg(2+). UDP-N-acetyl-alpha-D-glucosamine is bound by residues G139, E154, N169, and N227. N227 is a binding site for Mg(2+). The segment at 230–250 (IALAEATRIMQRRINEGHMRD) is linker. The N-acetyltransferase stretch occupies residues 251–461 (GVTFIDPATA…LPLSEDEEWK (211 aa)). R332 and K350 together coordinate UDP-N-acetyl-alpha-D-glucosamine. H362 acts as the Proton acceptor in catalysis. Residues Y365 and N376 each contribute to the UDP-N-acetyl-alpha-D-glucosamine site. Acetyl-CoA contacts are provided by A422 and R439.

In the N-terminal section; belongs to the N-acetylglucosamine-1-phosphate uridyltransferase family. This sequence in the C-terminal section; belongs to the transferase hexapeptide repeat family. In terms of assembly, homotrimer. It depends on Mg(2+) as a cofactor.

The protein localises to the cytoplasm. It catalyses the reaction alpha-D-glucosamine 1-phosphate + acetyl-CoA = N-acetyl-alpha-D-glucosamine 1-phosphate + CoA + H(+). The enzyme catalyses N-acetyl-alpha-D-glucosamine 1-phosphate + UTP + H(+) = UDP-N-acetyl-alpha-D-glucosamine + diphosphate. The protein operates within nucleotide-sugar biosynthesis; UDP-N-acetyl-alpha-D-glucosamine biosynthesis; N-acetyl-alpha-D-glucosamine 1-phosphate from alpha-D-glucosamine 6-phosphate (route II): step 2/2. Its pathway is nucleotide-sugar biosynthesis; UDP-N-acetyl-alpha-D-glucosamine biosynthesis; UDP-N-acetyl-alpha-D-glucosamine from N-acetyl-alpha-D-glucosamine 1-phosphate: step 1/1. It functions in the pathway bacterial outer membrane biogenesis; LPS lipid A biosynthesis. Its function is as follows. Catalyzes the last two sequential reactions in the de novo biosynthetic pathway for UDP-N-acetylglucosamine (UDP-GlcNAc). The C-terminal domain catalyzes the transfer of acetyl group from acetyl coenzyme A to glucosamine-1-phosphate (GlcN-1-P) to produce N-acetylglucosamine-1-phosphate (GlcNAc-1-P), which is converted into UDP-GlcNAc by the transfer of uridine 5-monophosphate (from uridine 5-triphosphate), a reaction catalyzed by the N-terminal domain. The chain is Bifunctional protein GlmU from Lactobacillus delbrueckii subsp. bulgaricus (strain ATCC 11842 / DSM 20081 / BCRC 10696 / JCM 1002 / NBRC 13953 / NCIMB 11778 / NCTC 12712 / WDCM 00102 / Lb 14).